We begin with the raw amino-acid sequence, 229 residues long: uncharacterized protein (229 aa).

A coiled-coil region spans residues 66 to 94 (GHEKLQIQSALRDIESAENQARVQQCNAK).

This is an uncharacterized protein from Ostreid herpesvirus 1 (isolate France) (OsHV-1).